The chain runs to 143 residues: Large ribosomal subunit protein uL11 (143 aa).

The protein belongs to the universal ribosomal protein uL11 family. Part of the ribosomal stalk of the 50S ribosomal subunit. Interacts with L10 and the large rRNA to form the base of the stalk. L10 forms an elongated spine to which L12 dimers bind in a sequential fashion forming a multimeric L10(L12)X complex. In terms of processing, one or more lysine residues are methylated.

Its function is as follows. Forms part of the ribosomal stalk which helps the ribosome interact with GTP-bound translation factors. This is Large ribosomal subunit protein uL11 from Pseudomonas fluorescens (strain Pf0-1).